The chain runs to 498 residues: Protein flp (498 aa).

4 helical membrane passes run 6–26 (LYFL…IYIT), 389–409 (FNIV…FSAY), 433–453 (LTLC…YLIL), and 471–491 (LALI…LLFL).

Its subcellular location is the cell membrane. Its function is as follows. Its precise function is unknown. Has no penicillin-binding activity and is not involved in methicillin resistance. The polypeptide is Protein flp (flp) (Staphylococcus aureus (strain Mu50 / ATCC 700699)).